The following is a 441-amino-acid chain: Nucleoprotein (441 aa).

A disordered region spans residues 1 to 56 (MSYTPGHHAGSRSSSGNRSGILKKTSWVDQSERSHQTYNRGRKPQPKFTVSTQPQG). Residues 11–20 (SRSSSGNRSG) show a composition bias toward low complexity. The interval 53–193 (QPQGNPIPHY…GYYVEGSGRS (141 aa)) is RNA-binding. A CoV N NTD domain is found at 60–189 (PHYSWFSGIT…ILPQGYYVEG (130 aa)). 2 residues coordinate RNA: Arg-105 and Arg-121. Ser-158 carries the post-translational modification Phosphoserine; by host. Arg-163 contacts RNA. At Thr-173 the chain carries Phosphothreonine; by host. The segment at 186–226 (YVEGSGRSASNSRPGSRSQSRGPNNRSLSRSNSNFRHSDSI) is disordered. Over residues 189 to 220 (GSGRSASNSRPGSRSQSRGPNNRSLSRSNSNF) the composition is skewed to low complexity. Ser-190 bears the Phosphoserine; by host mark. A CoV N CTD domain is found at 257–379 (AKEIRHKILM…ENLDAYVNSN (123 aa)). The tract at residues 264-382 (ILMKPRQKRT…DAYVNSNQNT (119 aa)) is dimerization. Over residues 380 to 389 (QNTVSGSLSP) the composition is skewed to polar residues. The disordered stretch occupies residues 380–408 (QNTVSGSLSPKPQRKRGVKQSPESFDSLN). 2 positions are modified to phosphoserine; by host: Ser-388 and Ser-417. Phosphothreonine; by host is present on Thr-421.

The protein belongs to the betacoronavirus nucleocapsid protein family. In terms of assembly, homooligomer. Both monomeric and oligomeric forms interact with RNA. Interacts with protein M. Interacts with NSP3; this interaction serves to tether the genome to the newly translated replicase-transcriptase complex at a very early stage of infection. In terms of processing, ADP-ribosylated. The ADP-ribosylation is retained in the virion during infection. Phosphorylated on serine and threonine residues.

It localises to the virion. The protein resides in the host endoplasmic reticulum-Golgi intermediate compartment. The protein localises to the host Golgi apparatus. Packages the positive strand viral genome RNA into a helical ribonucleocapsid (RNP) and plays a fundamental role during virion assembly through its interactions with the viral genome and membrane protein M. Plays an important role in enhancing the efficiency of subgenomic viral RNA transcription as well as viral replication. This chain is Nucleoprotein, found in Homo sapiens (Human).